The following is a 205-amino-acid chain: Ribonuclease HII (205 aa).

An RNase H type-2 domain is found at 22-205; that stretch reads RFICGVDEAG…RKSFLKNILR (184 aa). A divalent metal cation-binding residues include Asp28, Glu29, and Asp120.

The protein belongs to the RNase HII family. Mn(2+) serves as cofactor. The cofactor is Mg(2+).

Its subcellular location is the cytoplasm. The enzyme catalyses Endonucleolytic cleavage to 5'-phosphomonoester.. Its function is as follows. Endonuclease that specifically degrades the RNA of RNA-DNA hybrids. The sequence is that of Ribonuclease HII from Caldicellulosiruptor saccharolyticus (strain ATCC 43494 / DSM 8903 / Tp8T 6331).